Reading from the N-terminus, the 158-residue chain is uncharacterized protein (158 aa).

A run of 3 helical transmembrane segments spans residues 45 to 65 (GIFFQVVGAILVFGAYLPAVI), 76 to 96 (LAIGMWIISIAGLGLLAIFAW), and 106 to 126 (FILVALSETLSCIASIIVFAL).

To U.parvum UU007, UU041 and UU042.

The protein localises to the cell membrane. This is an uncharacterized protein from Ureaplasma parvum serovar 3 (strain ATCC 700970).